The primary structure comprises 131 residues: MAKPTKGKAPRRSRRNISAGRAYVHASYNNTIVTITDLDGNSVAWSSGGTIGYKGSKKGTPYAAQLAAADAVKKAQTSFGMAAVDVIVRGSGSGREQAIRAIQASGIEVRSIMDDSPVPHNGCRPKKKFRA.

This sequence belongs to the universal ribosomal protein uS11 family. In terms of assembly, part of the 30S ribosomal subunit. Interacts with proteins S7 and S18. Binds to IF-3.

Functionally, located on the platform of the 30S subunit, it bridges several disparate RNA helices of the 16S rRNA. Forms part of the Shine-Dalgarno cleft in the 70S ribosome. The sequence is that of Small ribosomal subunit protein uS11 from Deinococcus radiodurans (strain ATCC 13939 / DSM 20539 / JCM 16871 / CCUG 27074 / LMG 4051 / NBRC 15346 / NCIMB 9279 / VKM B-1422 / R1).